Reading from the N-terminus, the 588-residue chain is Aspartate--tRNA ligase (588 aa).

E177 is an L-aspartate binding site. Residues 201-204 (QIFK) are aspartate. L-aspartate is bound at residue R223. Residues 223-225 (RDE) and Q232 each bind ATP. Residue H451 participates in L-aspartate binding. E485 lines the ATP pocket. An L-aspartate-binding site is contributed by R492. 537–540 (GLDR) contributes to the ATP binding site.

The protein belongs to the class-II aminoacyl-tRNA synthetase family. Type 1 subfamily. As to quaternary structure, homodimer.

Its subcellular location is the cytoplasm. It catalyses the reaction tRNA(Asp) + L-aspartate + ATP = L-aspartyl-tRNA(Asp) + AMP + diphosphate. Functionally, catalyzes the attachment of L-aspartate to tRNA(Asp) in a two-step reaction: L-aspartate is first activated by ATP to form Asp-AMP and then transferred to the acceptor end of tRNA(Asp). The polypeptide is Aspartate--tRNA ligase (Staphylococcus saprophyticus subsp. saprophyticus (strain ATCC 15305 / DSM 20229 / NCIMB 8711 / NCTC 7292 / S-41)).